The following is a 94-amino-acid chain: Co-chaperonin GroES (94 aa).

It belongs to the GroES chaperonin family. In terms of assembly, heptamer of 7 subunits arranged in a ring. Interacts with the chaperonin GroEL.

The protein resides in the cytoplasm. Its function is as follows. Together with the chaperonin GroEL, plays an essential role in assisting protein folding. The GroEL-GroES system forms a nano-cage that allows encapsulation of the non-native substrate proteins and provides a physical environment optimized to promote and accelerate protein folding. GroES binds to the apical surface of the GroEL ring, thereby capping the opening of the GroEL channel. The sequence is that of Co-chaperonin GroES from Alkaliphilus oremlandii (strain OhILAs) (Clostridium oremlandii (strain OhILAs)).